The chain runs to 489 residues: Diaminopimelate decarboxylase 2, chloroplastic (489 aa).

A chloroplast-targeting transit peptide spans 1 to 50 (MAAVTQFLSQPSSIRGTLNQYQLNQTSLSRIPFLSLKSTLKPLKRLSVKA). The residue at position 51 (Ala51) is an N-acetylalanine. Lys130 bears the N6-(pyridoxal phosphate)lysine mark. Residues Gly309 and 345 to 348 (EPGR) each bind pyridoxal 5'-phosphate. Residues Arg348, Arg384, and Tyr388 each contribute to the substrate site. Catalysis depends on Cys416, which acts as the Proton donor. Residues Glu417 and Tyr445 each contribute to the substrate site. Tyr445 contacts pyridoxal 5'-phosphate.

This sequence belongs to the Orn/Lys/Arg decarboxylase class-II family. LysA subfamily. Homodimer. The cofactor is pyridoxal 5'-phosphate.

Its subcellular location is the plastid. The protein resides in the chloroplast. It catalyses the reaction meso-2,6-diaminopimelate + H(+) = L-lysine + CO2. It functions in the pathway amino-acid biosynthesis; L-lysine biosynthesis via DAP pathway; L-lysine from DL-2,6-diaminopimelate: step 1/1. In terms of biological role, specifically catalyzes the decarboxylation of meso-diaminopimelate (meso-DAP) to L-lysine. In Arabidopsis thaliana (Mouse-ear cress), this protein is Diaminopimelate decarboxylase 2, chloroplastic (LYSA2).